Here is a 386-residue protein sequence, read N- to C-terminus: 17-hydroxy-3-oxo-4-pregnene-20-carboxyl-CoA lyase (386 aa).

Tyrosine 292 serves as the catalytic Proton acceptor. Tyrosine 342 acts as the Proton donor in catalysis.

It belongs to the thiolase-like superfamily. As to quaternary structure, homodimer. Interacts with the ChsH1/ChsH2 hydratase via the DUF35 C-terminal region of ChsH2 (ChsH2-DUF35). The ChsH1-ChsH2-Ltp2 protein complex is composed of two protomers that form a heterohexameric structure through the Ltp2 dimerization interface.

It catalyses the reaction 17-hydroxy-3-oxochol-4-en-22-oyl-CoA = androst-4-ene-3,17-dione + propanoyl-CoA. It functions in the pathway steroid metabolism; cholesterol degradation. Involved in cholesterol side chain degradation. When associated with the ChsH1/ChsH2 hydratase, catalyzes the retroaldol cleavage of 17-hydroxy-3-oxo-4-pregnene-20-carboxyl-CoA (17-HOPC-CoA) produced by the hydratase, forming androst-4-ene-3,17-dione and propionyl-CoA. The polypeptide is 17-hydroxy-3-oxo-4-pregnene-20-carboxyl-CoA lyase (Mycobacterium tuberculosis (strain ATCC 25618 / H37Rv)).